The sequence spans 618 residues: Isocitrate dehydrogenase kinase/phosphatase (618 aa).

ATP is bound by residues 332–338 and lysine 353; that span reads APGIKGM. The active site involves aspartate 388.

The protein belongs to the AceK family.

The protein localises to the cytoplasm. It catalyses the reaction L-seryl-[isocitrate dehydrogenase] + ATP = O-phospho-L-seryl-[isocitrate dehydrogenase] + ADP + H(+). Bifunctional enzyme which can phosphorylate or dephosphorylate isocitrate dehydrogenase (IDH) on a specific serine residue. This is a regulatory mechanism which enables bacteria to bypass the Krebs cycle via the glyoxylate shunt in response to the source of carbon. When bacteria are grown on glucose, IDH is fully active and unphosphorylated, but when grown on acetate or ethanol, the activity of IDH declines drastically concomitant with its phosphorylation. This Methylibium petroleiphilum (strain ATCC BAA-1232 / LMG 22953 / PM1) protein is Isocitrate dehydrogenase kinase/phosphatase.